A 557-amino-acid polypeptide reads, in one-letter code: uncharacterized protein (557 aa).

The region spanning 7–206 (SSFIDMLRLG…FACFLEGMLS (200 aa)) is the DhaL domain.

This is an uncharacterized protein from Mycoplasma genitalium (strain ATCC 33530 / DSM 19775 / NCTC 10195 / G37) (Mycoplasmoides genitalium).